The sequence spans 756 residues: ATP-dependent zinc metalloprotease FtsH (756 aa).

Topologically, residues 1–44 are cytoplasmic; sequence MGVPAGMPHPNGLQPQRKDKALAQNPNTPQKGSEAFLKKLIHSS. Residues 45–65 traverse the membrane as a helical segment; sequence WFFPGAAIVVMLGFLMASFFT. Over 66–148 the chain is Extracellular; it reads QPSRQVDTNV…SYTDQPVEHS (83 aa). Residues 149 to 169 traverse the membrane as a helical segment; sequence FLGSLVSLLLPILLFGVLFWF. At 170–756 the chain is on the cytoplasmic side; it reads LMGRVGGGSS…NQNGAENERG (587 aa). Residue 241 to 248 participates in ATP binding; it reads GPPGTGKT. Position 463 (H463) interacts with Zn(2+). E464 is a catalytic residue. The Zn(2+) site is built by H467 and D539. Basic and acidic residues-rich tracts occupy residues 647–662 and 672–681; these read PEREHWYSKPTRERTD and LAKEAEKSEE. Positions 647–756 are disordered; it reads PEREHWYSKP…NQNGAENERG (110 aa). 2 stretches are compositionally biased toward low complexity: residues 684-703 and 713-724; these read AEAPTVPVAPAAPAQQVPVA and PLTDPDADPTVA. The segment covering 744 to 756 has biased composition (polar residues); it reads GTPNQNGAENERG.

In the central section; belongs to the AAA ATPase family. This sequence in the C-terminal section; belongs to the peptidase M41 family. In terms of assembly, homohexamer. Requires Zn(2+) as cofactor.

The protein localises to the cell membrane. In terms of biological role, acts as a processive, ATP-dependent zinc metallopeptidase for both cytoplasmic and membrane proteins. Plays a role in the quality control of integral membrane proteins. The chain is ATP-dependent zinc metalloprotease FtsH from Rothia mucilaginosa (strain DY-18) (Stomatococcus mucilaginosus).